The primary structure comprises 171 residues: Myosin regulatory light chain 12A (171 aa).

Thr18 bears the Phosphothreonine; by MLCK mark. Ser19 is modified (phosphoserine; by MLCK). 3 consecutive EF-hand domains span residues 28-63 (SQIQ…LGKN), 97-132 (DPED…MGDR), and 133-168 (FTDE…GAKD). Ca(2+) contacts are provided by Asp41, Asn43, Asp45, and Asp52.

Myosin is a hexamer of 2 heavy chains and 4 light chains. Phosphorylation increases the actin-activated myosin ATPase activity and thereby regulates the contractile activity. It is required to generate the driving force in the migration of the cells but not necessary for localization of myosin-2 at the leading edge.

In terms of biological role, myosin regulatory subunit that plays an important role in regulation of both smooth muscle and nonmuscle cell contractile activity via its phosphorylation. Implicated in cytokinesis, receptor capping, and cell locomotion. In Homo sapiens (Human), this protein is Myosin regulatory light chain 12A (MYL12A).